Here is a 147-residue protein sequence, read N- to C-terminus: Prefoldin subunit alpha (147 aa).

This sequence belongs to the prefoldin subunit alpha family. As to quaternary structure, heterohexamer of two alpha and four beta subunits.

Its subcellular location is the cytoplasm. Its function is as follows. Molecular chaperone capable of stabilizing a range of proteins. Seems to fulfill an ATP-independent, HSP70-like function in archaeal de novo protein folding. This Saccharolobus solfataricus (strain ATCC 35092 / DSM 1617 / JCM 11322 / P2) (Sulfolobus solfataricus) protein is Prefoldin subunit alpha (pfdA).